Here is a 571-residue protein sequence, read N- to C-terminus: Proline--tRNA ligase (571 aa).

It belongs to the class-II aminoacyl-tRNA synthetase family. ProS type 1 subfamily. As to quaternary structure, homodimer.

Its subcellular location is the cytoplasm. It catalyses the reaction tRNA(Pro) + L-proline + ATP = L-prolyl-tRNA(Pro) + AMP + diphosphate. In terms of biological role, catalyzes the attachment of proline to tRNA(Pro) in a two-step reaction: proline is first activated by ATP to form Pro-AMP and then transferred to the acceptor end of tRNA(Pro). As ProRS can inadvertently accommodate and process non-cognate amino acids such as alanine and cysteine, to avoid such errors it has two additional distinct editing activities against alanine. One activity is designated as 'pretransfer' editing and involves the tRNA(Pro)-independent hydrolysis of activated Ala-AMP. The other activity is designated 'posttransfer' editing and involves deacylation of mischarged Ala-tRNA(Pro). The misacylated Cys-tRNA(Pro) is not edited by ProRS. This Aliivibrio salmonicida (strain LFI1238) (Vibrio salmonicida (strain LFI1238)) protein is Proline--tRNA ligase.